A 210-amino-acid chain; its full sequence is 3-phospho-D-glycerate guanylyltransferase (210 aa).

The protein belongs to the CofC family.

It carries out the reaction (2R)-3-phosphoglycerate + GTP + H(+) = 3-[(R)-glyceryl]-diphospho-5'-guanosine + diphosphate. The protein operates within cofactor biosynthesis; coenzyme F420 biosynthesis. In terms of biological role, guanylyltransferase that catalyzes the activation of (2R)-3-phosphoglycerate (3PG) as 3-[(R)-glyceryl]-diphospho-5'-guanosine, via the condensation of 3PG with GTP. It is involved in the biosynthesis of a derivative of the hydride carrier cofactor coenzyme F420, 3PG-F420. This Colwellia psychrerythraea (strain 34H / ATCC BAA-681) (Vibrio psychroerythus) protein is 3-phospho-D-glycerate guanylyltransferase.